A 490-amino-acid polypeptide reads, in one-letter code: UDP-N-acetylmuramoyl-L-alanyl-D-glutamate--LD-lysine ligase (490 aa).

Serine 32 provides a ligand contact to UDP-N-acetyl-alpha-D-muramoyl-L-alanyl-D-glutamate. Glycine 110–threonine 116 contacts ATP. UDP-N-acetyl-alpha-D-muramoyl-L-alanyl-D-glutamate-binding positions include threonine 152 to threonine 153, serine 179, glutamine 185, and arginine 187. Lysine 219 is modified (N6-carboxylysine).

This sequence belongs to the MurCDEF family. MurE subfamily. Carboxylation is probably crucial for Mg(2+) binding and, consequently, for the gamma-phosphate positioning of ATP.

The protein localises to the cytoplasm. The enzyme catalyses UDP-N-acetyl-alpha-D-muramoyl-L-alanyl-D-glutamate + L-lysine + ATP = UDP-N-acetyl-alpha-D-muramoyl-L-alanyl-gamma-D-glutamyl-L-lysine + ADP + phosphate + H(+). It carries out the reaction UDP-N-acetyl-alpha-D-muramoyl-L-alanyl-D-glutamate + D-lysine + ATP = N(6)-(UDP-N-acetyl-alpha-D-muramoyl-L-alanyl-gamma-D-glutamyl)-D-lysine + ADP + phosphate + H(+). It participates in cell wall biogenesis; peptidoglycan biosynthesis. Catalyzes the addition of both L- and D-lysine to the nucleotide precursor UDP-N-acetylmuramoyl-L-alanyl-D-glutamate (UMAG) in the biosynthesis of bacterial cell-wall peptidoglycan. Is also able to use meso-diaminopimelate as the amino acid substrate in vitro, although much less efficiently. This is UDP-N-acetylmuramoyl-L-alanyl-D-glutamate--LD-lysine ligase (murE) from Thermotoga maritima (strain ATCC 43589 / DSM 3109 / JCM 10099 / NBRC 100826 / MSB8).